We begin with the raw amino-acid sequence, 290 residues long: Glycine--tRNA ligase alpha subunit (290 aa).

It belongs to the class-II aminoacyl-tRNA synthetase family. As to quaternary structure, tetramer of two alpha and two beta subunits.

The protein localises to the cytoplasm. It catalyses the reaction tRNA(Gly) + glycine + ATP = glycyl-tRNA(Gly) + AMP + diphosphate. The chain is Glycine--tRNA ligase alpha subunit from Zymomonas mobilis subsp. mobilis (strain ATCC 31821 / ZM4 / CP4).